A 371-amino-acid chain; its full sequence is Flagellar P-ring protein (371 aa).

The signal sequence occupies residues 1-25 (MKMRACKWLLTLAVAFAATLSSAYA).

It belongs to the FlgI family. The basal body constitutes a major portion of the flagellar organelle and consists of four rings (L,P,S, and M) mounted on a central rod.

Its subcellular location is the periplasm. The protein localises to the bacterial flagellum basal body. Its function is as follows. Assembles around the rod to form the L-ring and probably protects the motor/basal body from shearing forces during rotation. This chain is Flagellar P-ring protein, found in Sinorhizobium medicae (strain WSM419) (Ensifer medicae).